We begin with the raw amino-acid sequence, 459 residues long: Interleukin-7 receptor subunit alpha (459 aa).

A signal peptide spans 1–20 (MMALGRAFAIVFCLIQAVSG). Over 21–239 (ESGNAQDGDL…PEPKNQGGWD (219 aa)) the chain is Extracellular. Cysteines 42 and 57 form a disulfide. Asn60 is a glycosylation site (N-linked (GlcNAc...) asparagine). Cystine bridges form between Cys74/Cys82 and Cys108/Cys118. Residues Asn115 and Asn177 are each glycosylated (N-linked (GlcNAc...) asparagine). One can recognise a Fibronectin type-III domain in the interval 131–232 (APSDLKVVYR…PSSTFETPEP (102 aa)). Positions 218–222 (WSEWS) match the WSXWS motif motif. A helical transmembrane segment spans residues 240 to 264 (PVLPSVTILSLFSVFLLVILAHVLW). Residues 265 to 459 (KKRIKPVVWP…VTMSSFYQNK (195 aa)) are Cytoplasmic-facing. The short motif at 272–280 (VWPSLPDHK) is the Box 1 motif element. Phosphothreonine; by PKC is present on Thr282. 2 disordered regions span residues 337–365 (TQGHRAAVHSANRSPETSVSPPETVRRES) and 378–413 (NAPPLLSSRSPDYRDGDRNRPPVYQDLLPNSGNTNV). Positions 347–357 (ANRSPETSVSP) are enriched in polar residues. The span at 388–397 (PDYRDGDRNR) shows a compositional bias: basic and acidic residues.

The protein belongs to the type I cytokine receptor family. Type 4 subfamily. In terms of assembly, the IL7 receptor is a heterodimer of IL7R and IL2RG. The TSLP receptor is a heterodimer of CRLF2 and IL7R. Interacts with CD53. In terms of processing, N-glycosylated IL-7Ralpha binds IL7 300-fold more tightly than the unglycosylated form. Post-translationally, ubiquitinated by MARCHF8; leading to lysosomal degradation. As to expression, spleen, thymus and fetal liver.

It localises to the membrane. Functionally, receptor for interleukin-7. Also acts as a receptor for thymic stromal lymphopoietin (TSLP). In Mus musculus (Mouse), this protein is Interleukin-7 receptor subunit alpha (Il7r).